Reading from the N-terminus, the 726-residue chain is Probable dipeptidyl-peptidase 5 (726 aa).

The N-terminal stretch at 1-19 (MAAAKWLIASLAFASSGLA) is a signal peptide. 2 N-linked (GlcNAc...) asparagine glycosylation sites follow: N96 and N252. Residues 269–291 (AEPINKRNGPRTPQGIEGASSSP) are disordered. N485 carries an N-linked (GlcNAc...) asparagine glycan. Residue S558 is the Charge relay system of the active site. The N-linked (GlcNAc...) asparagine glycan is linked to N605. Catalysis depends on charge relay system residues D641 and H673. The N-linked (GlcNAc...) asparagine glycan is linked to N699.

This sequence belongs to the peptidase S9C family.

The protein resides in the secreted. Functionally, extracellular dipeptidyl-peptidase which removes N-terminal dipeptides sequentially from polypeptides having unsubstituted N-termini. Contributes to pathogenicity. The polypeptide is Probable dipeptidyl-peptidase 5 (DPP5) (Arthroderma benhamiae (strain ATCC MYA-4681 / CBS 112371) (Trichophyton mentagrophytes)).